We begin with the raw amino-acid sequence, 117 residues long: Cytochrome c6 (117 aa).

Positions 1–24 (MKKLLAIALTVLATVFAFGTPAFA) are cleaved as a signal peptide. Heme c contacts are provided by cysteine 38, cysteine 41, histidine 42, and methionine 89.

It belongs to the cytochrome c family. PetJ subfamily. In terms of assembly, monomer. Binds 1 heme c group covalently per subunit.

Its subcellular location is the cellular thylakoid lumen. Functions as an electron carrier between membrane-bound cytochrome b6-f and photosystem I in oxygenic photosynthesis. In Picosynechococcus sp. (strain ATCC 27264 / PCC 7002 / PR-6) (Agmenellum quadruplicatum), this protein is Cytochrome c6 (petJ).